The primary structure comprises 116 residues: NADH-ubiquinone oxidoreductase chain 3 (116 aa).

The next 3 helical transmembrane spans lie at 4-24, 56-76, and 88-108; these read IIFL…AAHA, FFLV…LFPL, and LIPI…FEWI.

It belongs to the complex I subunit 3 family.

It localises to the mitochondrion membrane. It carries out the reaction a ubiquinone + NADH + 5 H(+)(in) = a ubiquinol + NAD(+) + 4 H(+)(out). Its function is as follows. Core subunit of the mitochondrial membrane respiratory chain NADH dehydrogenase (Complex I) that is believed to belong to the minimal assembly required for catalysis. Complex I functions in the transfer of electrons from NADH to the respiratory chain. The immediate electron acceptor for the enzyme is believed to be ubiquinone. The polypeptide is NADH-ubiquinone oxidoreductase chain 3 (ND3) (Strongylocentrotus purpuratus (Purple sea urchin)).